Here is a 55-residue protein sequence, read N- to C-terminus: MAKSADIRPGITLACTECKERNYITTKNRRNTPDRLELKKFCPRCGKQTVHRETR.

It belongs to the bacterial ribosomal protein bL33 family.

The sequence is that of Large ribosomal subunit protein bL33 from Bifidobacterium longum (strain DJO10A).